A 105-amino-acid polypeptide reads, in one-letter code: Protein S100-A11 (105 aa).

N-acetylmethionine is present on M1. N-acetylalanine; in Protein S100-A11, N-terminally processed is present on A2. N6-acetyllysine is present on K3. Phosphoserine is present on residues S5 and S6. Phosphothreonine is present on T10. EF-hand domains lie at 13–49 (CIES…ELAA) and 55–90 (KDPG…LAMA). Residue K27 is modified to N6-acetyllysine. 7 residues coordinate Ca(2+): T33, E38, D68, N70, D72, Q74, and E79.

The protein belongs to the S-100 family. Homodimer; disulfide-linked. Phosphorylation at Thr-10 by PRKCA significantly suppresses homodimerization and promotes association with NCL/nucleolin which induces nuclear translocation.

Its subcellular location is the cytoplasm. It localises to the nucleus. Facilitates the differentiation and the cornification of keratinocytes. This chain is Protein S100-A11 (S100A11), found in Homo sapiens (Human).